The primary structure comprises 148 residues: Prefoldin subunit 2 (148 aa).

Positions 87–114 (KDGLEEVVRKLYETLEKKKKDLTEFEAK) form a coiled coil. A compositionally biased stretch (basic and acidic residues) spans 122–134 (QEDNKEGGNKKEG). The disordered stretch occupies residues 122 to 148 (QEDNKEGGNKKEGNAQGVLVGAASSSQ).

Belongs to the prefoldin subunit beta family. As to quaternary structure, heterohexamer of two PFD-alpha type and four PFD-beta type subunits forming prefoldin co-chaperone complex. Interacts with LSM8, a specific subunit of the LSM2-8 complex, which is a core component of the spliceosome.

It localises to the cytoplasm. It is found in the nucleus. Its function is as follows. Binds specifically to cytosolic chaperonin (c-CPN) and transfers target proteins to it. Binds to nascent polypeptide chain and promotes folding in an environment in which there are many competing pathways for nonnative proteins. Together with other chaperonins, contribute to the regulation of gene expression by modulating the spliceosome function on pre-mRNA splicing post-transcriptionally by acting as a co-chaperone of Hsp90 to control levels of LSM8. Required for microtubules (MTs) organization and dynamicity. Involved in the process leading to microtubules dissociation in response to gibberellic acid (GA) probably due to the DELLA proteins-mediated translocation of the prefoldin co-chaperone complex from the cytoplasm to the nucleus. The polypeptide is Prefoldin subunit 2 (Arabidopsis thaliana (Mouse-ear cress)).